The sequence spans 260 residues: Voltage-dependent calcium channel gamma-6 subunit (260 aa).

4 helical membrane passes run 43–63 (LLVA…EFWV), 143–163 (VIAV…IMVL), 169–189 (FLLR…FVSL), and 221–241 (LGCG…FLLL).

The protein belongs to the PMP-22/EMP/MP20 family. CACNG subfamily. As to quaternary structure, interacts with CACNA1C. Identified in a complex with the L-type calcium channel subunits CACNA1C, CACNA2D1 and either CACNB1 or CACNB2. In terms of tissue distribution, detected in heart atrium and ventricle, aorta and skeletal muscle. Detected in heart left ventricle.

It localises to the cell membrane. In terms of biological role, regulates the activity of L-type calcium channels that contain CACNA1C as pore-forming subunit. The chain is Voltage-dependent calcium channel gamma-6 subunit (Cacng6) from Rattus norvegicus (Rat).